The primary structure comprises 183 residues: Threonylcarbamoyl-AMP synthase (183 aa).

The YrdC-like domain occupies 1-183; the sequence is MNITQIIEKL…LFTNQLVRQG (183 aa).

The protein belongs to the SUA5 family. TsaC subfamily.

The protein localises to the cytoplasm. The enzyme catalyses L-threonine + hydrogencarbonate + ATP = L-threonylcarbamoyladenylate + diphosphate + H2O. Its function is as follows. Required for the formation of a threonylcarbamoyl group on adenosine at position 37 (t(6)A37) in tRNAs that read codons beginning with adenine. Catalyzes the conversion of L-threonine, HCO(3)(-)/CO(2) and ATP to give threonylcarbamoyl-AMP (TC-AMP) as the acyladenylate intermediate, with the release of diphosphate. This chain is Threonylcarbamoyl-AMP synthase, found in Histophilus somni (strain 2336) (Haemophilus somnus).